The primary structure comprises 329 residues: Acetyl-coenzyme A carboxylase carboxyl transferase subunit alpha (329 aa).

The CoA carboxyltransferase C-terminal domain occupies 40–294; sequence QLETLAARRR…KNALEKHLSE (255 aa).

This sequence belongs to the AccA family. Acetyl-CoA carboxylase is a heterohexamer composed of biotin carboxyl carrier protein (AccB), biotin carboxylase (AccC) and two subunits each of ACCase subunit alpha (AccA) and ACCase subunit beta (AccD).

It localises to the cytoplasm. The catalysed reaction is N(6)-carboxybiotinyl-L-lysyl-[protein] + acetyl-CoA = N(6)-biotinyl-L-lysyl-[protein] + malonyl-CoA. Its pathway is lipid metabolism; malonyl-CoA biosynthesis; malonyl-CoA from acetyl-CoA: step 1/1. Its function is as follows. Component of the acetyl coenzyme A carboxylase (ACC) complex. First, biotin carboxylase catalyzes the carboxylation of biotin on its carrier protein (BCCP) and then the CO(2) group is transferred by the carboxyltransferase to acetyl-CoA to form malonyl-CoA. The polypeptide is Acetyl-coenzyme A carboxylase carboxyl transferase subunit alpha (Prochlorococcus marinus (strain NATL2A)).